A 778-amino-acid polypeptide reads, in one-letter code: MNSSDEEDIALSRLAKKSSSITSASTYEDDEDDDIPLAKKSRKKRVESDYEEDEDEVPLKKLSNGRAKKQVKTETKVKKEPKSANKSKSTSKKDTKVKKEKTTVKKESKATSTKVKEESKTQSDSQASVKSETPEEDQGYKWWEVNQEEEGDGYIKWQTLEHNGVMFPPPYEPLPSHVKLYYNNKPVNLPPEAEEVAGFYGAMLETDHAKNPVFQKNFFNDFLEVLKECGGCGVEIKKFEKLDFSKMYAHFEKLREEKKAMSREEKKRIKEEKEKEEEPYRTCYLNGRKELVGNFRIEPPGLFRGRGAHPKTGKLKRRVVSEQVTLNLGKDAKIPEPPAGHQWGEIRHDNEVTWLAMWKENISDSLKYVRFANNSSVKGQSDFKKFETARKLRDHVDSIRKDYTKMLKSEKMQDRQMATAMYLIDVFALRAGGEKGEDEADTVGCCSLRYEHVTLKPPNKVIFDLLGKDSIRFYQEVEVDKQVFKNLRIFKKSPKQPGDDLFDRINPSLVNRQLQNYMKGLTAKVFRTYNASKTMQDQIDIIENEGTVAEKVAKFNAANRTVAILCNHQRTVSKTHGDSVQRINDKLKKFMWQKIRLKKMILQLEPKLKKKDSKYFEEIDDLIKEDIEHIHHTIIKRQREQAKKKLERDNEKLKLEGKPLLTESDIKDKLDKIDELEKEYQKELKTGKPIVTKNATVEKLKQQIETLENRILNVSIQLKDKEDNSEVSLGTSKMNYIDPRLIVMFSKKFDVPIEKLFTKTLREKFIWAIESADENWRF.

The segment at 1–141 (MNSSDEEDIA…ETPEEDQGYK (141 aa)) is disordered. Residues 17-26 (KSSSITSAST) are compositionally biased toward low complexity. Composition is skewed to basic and acidic residues over residues 71–83 (VKTE…EPKS) and 100–121 (EKTT…ESKT). Over residues 122-131 (QSDSQASVKS) the composition is skewed to polar residues. 3 interaction with DNA regions span residues 367-368 (KY), 430-435 (RAGGEK), and 522-524 (TAK). Positions 374-778 (NSSVKGQSDF…IESADENWRF (405 aa)) constitute a Topo IB-type catalytic domain. Tyrosine 736 serves as the catalytic O-(3'-phospho-DNA)-tyrosine intermediate.

The protein belongs to the type IB topoisomerase family.

The enzyme catalyses ATP-independent breakage of single-stranded DNA, followed by passage and rejoining.. In terms of biological role, releases the supercoiling and torsional tension of DNA introduced during the DNA replication and transcription by transiently cleaving and rejoining one strand of the DNA duplex. Introduces a single-strand break via transesterification at a target site in duplex DNA. The scissile phosphodiester is attacked by the catalytic tyrosine of the enzyme, resulting in the formation of a DNA-(3'-phosphotyrosyl)-enzyme intermediate and the expulsion of a 5'-OH DNA strand. The free DNA strand then rotates around the intact phosphodiester bond on the opposing strand, thus removing DNA supercoils. Finally, in the religation step, the DNA 5'-OH attacks the covalent intermediate to expel the active-site tyrosine and restore the DNA phosphodiester backbone. In Candida albicans (Yeast), this protein is DNA topoisomerase 1 (TOP1).